Reading from the N-terminus, the 257-residue chain is Phosphatidylglycerol--prolipoprotein diacylglyceryl transferase (257 aa).

A run of 4 helical transmembrane segments spans residues 8-28 (IFGL…ILAY), 48-68 (VFIV…VIFN), 84-104 (EGGL…YLMS), and 109-129 (LNFL…QAIG). R130 contacts a 1,2-diacyl-sn-glycero-3-phospho-(1'-sn-glycerol). The next 3 helical transmembrane spans lie at 169-189 (PTFL…LLIT), 196-216 (GSIF…IEGL), and 225-245 (SLRM…ILII).

Belongs to the Lgt family.

Its subcellular location is the cell membrane. The catalysed reaction is L-cysteinyl-[prolipoprotein] + a 1,2-diacyl-sn-glycero-3-phospho-(1'-sn-glycerol) = an S-1,2-diacyl-sn-glyceryl-L-cysteinyl-[prolipoprotein] + sn-glycerol 1-phosphate + H(+). It participates in protein modification; lipoprotein biosynthesis (diacylglyceryl transfer). In terms of biological role, catalyzes the transfer of the diacylglyceryl group from phosphatidylglycerol to the sulfhydryl group of the N-terminal cysteine of a prolipoprotein, the first step in the formation of mature lipoproteins. In Clostridium novyi (strain NT), this protein is Phosphatidylglycerol--prolipoprotein diacylglyceryl transferase.